Here is a 228-residue protein sequence, read N- to C-terminus: Enolase-phosphatase E1 (228 aa).

Belongs to the HAD-like hydrolase superfamily. MasA/MtnC family. In terms of assembly, monomer. Mg(2+) is required as a cofactor.

It carries out the reaction 5-methylsulfanyl-2,3-dioxopentyl phosphate + H2O = 1,2-dihydroxy-5-(methylsulfanyl)pent-1-en-3-one + phosphate. It participates in amino-acid biosynthesis; L-methionine biosynthesis via salvage pathway; L-methionine from S-methyl-5-thio-alpha-D-ribose 1-phosphate: step 3/6. Its pathway is amino-acid biosynthesis; L-methionine biosynthesis via salvage pathway; L-methionine from S-methyl-5-thio-alpha-D-ribose 1-phosphate: step 4/6. Bifunctional enzyme that catalyzes the enolization of 2,3-diketo-5-methylthiopentyl-1-phosphate (DK-MTP-1-P) into the intermediate 2-hydroxy-3-keto-5-methylthiopentenyl-1-phosphate (HK-MTPenyl-1-P), which is then dephosphorylated to form the acireductone 1,2-dihydroxy-3-keto-5-methylthiopentene (DHK-MTPene). The polypeptide is Enolase-phosphatase E1 (Picosynechococcus sp. (strain ATCC 27264 / PCC 7002 / PR-6) (Agmenellum quadruplicatum)).